The primary structure comprises 481 residues: Small ribosomal subunit protein bS1 (481 aa).

4 S1 motif domains span residues 36 to 105 (GDIV…LSKK), 123 to 188 (DEAV…LSRR), 209 to 277 (GAIR…LSLK), and 294 to 363 (GQIV…LSLK). A disordered region spans residues 437–465 (ATEEAGHGSSEQPPASSTPSAKATGGSLA). A compositionally biased stretch (polar residues) spans 445–457 (SSEQPPASSTPSA).

Belongs to the bacterial ribosomal protein bS1 family.

In terms of biological role, binds mRNA; thus facilitating recognition of the initiation point. It is needed to translate mRNA with a short Shine-Dalgarno (SD) purine-rich sequence. This chain is Small ribosomal subunit protein bS1 (rpsA), found in Mycobacterium leprae (strain TN).